We begin with the raw amino-acid sequence, 548 residues long: Probable inorganic phosphate transporter 1-5 (548 aa).

The Cytoplasmic portion of the chain corresponds to methionine 1–alanine 23. The helical transmembrane segment at valine 24–valine 44 threads the bilayer. At threonine 45 to serine 69 the chain is on the extracellular side. A helical membrane pass occupies residues alanine 70–leucine 90. Topologically, residues glycine 91–lysine 98 are cytoplasmic. A helical transmembrane segment spans residues valine 99 to glycine 119. Over serine 120 to lysine 123 the chain is Extracellular. Residues glycine 124–tyrosine 144 traverse the membrane as a helical segment. The Cytoplasmic segment spans residues proline 145–phenylalanine 163. A helical transmembrane segment spans residues isoleucine 164–isoleucine 184. At valine 185–alanine 210 the chain is on the extracellular side. A helical transmembrane segment spans residues aspartate 211–tryptophan 231. Topologically, residues arginine 232–histidine 303 are cytoplasmic. A helical transmembrane segment spans residues leucine 304–phenylalanine 324. Over glutamine 325–threonine 355 the chain is Extracellular. The chain crosses the membrane as a helical span at residues leucine 356–valine 376. Residues glycine 377 to arginine 378 lie on the Cytoplasmic side of the membrane. Residues phenylalanine 379–proline 399 form a helical membrane-spanning segment. Residues tyrosine 400–threonine 405 lie on the Extracellular side of the membrane. The chain crosses the membrane as a helical span at residues proline 406–glycine 426. The Cytoplasmic segment spans residues proline 427 to glycine 449. A helical transmembrane segment spans residues isoleucine 450–alanine 470. The Extracellular portion of the chain corresponds to glutamine 471–asparagine 490. The chain crosses the membrane as a helical span at residues serine 491–glutamate 511. Over serine 512–glutamate 548 the chain is Cytoplasmic. The interval glutamate 518–glutamate 548 is disordered. A compositionally biased stretch (polar residues) spans alanine 533–glutamate 548.

This sequence belongs to the major facilitator superfamily. Phosphate:H(+) symporter (TC 2.A.1.9) family. As to expression, expressed at low levels in roots.

The protein resides in the membrane. High-affinity transporter for external inorganic phosphate. The sequence is that of Probable inorganic phosphate transporter 1-5 (PHT1-5) from Oryza sativa subsp. japonica (Rice).